The primary structure comprises 522 residues: Cytochrome P450 26C1 (522 aa).

The helical transmembrane segment at 9 to 29 (LSVLGAAGTALLCAGLLLSLA) threads the bilayer. Cys459 lines the heme pocket.

It belongs to the cytochrome P450 family. Requires heme as cofactor. Detected in most tissues at very low level.

Its subcellular location is the membrane. It catalyses the reaction an organic molecule + reduced [NADPH--hemoprotein reductase] + O2 = an alcohol + oxidized [NADPH--hemoprotein reductase] + H2O + H(+). The enzyme catalyses all-trans-retinoate + reduced [NADPH--hemoprotein reductase] + O2 = all-trans-4-hydroxyretinoate + oxidized [NADPH--hemoprotein reductase] + H2O + H(+). It carries out the reaction all-trans-4-hydroxyretinoate + reduced [NADPH--hemoprotein reductase] + O2 = all-trans-4-oxoretinoate + oxidized [NADPH--hemoprotein reductase] + 2 H2O + H(+). The catalysed reaction is 9-cis-retinoate + reduced [NADPH--hemoprotein reductase] + O2 = 9-cis-4-hydroxyretinoate + oxidized [NADPH--hemoprotein reductase] + H2O + H(+). It catalyses the reaction 9-cis-4-hydroxyretinoate + reduced [NADPH--hemoprotein reductase] + O2 = 9-cis-4-oxoretinoate + oxidized [NADPH--hemoprotein reductase] + 2 H2O + H(+). The enzyme catalyses all-trans-4-hydroxy-13,14-dihydroretinoate + reduced [NADPH--hemoprotein reductase] + O2 = all-trans-4-oxo-13,14-dihydroretinoate + oxidized [NADPH--hemoprotein reductase] + 2 H2O + H(+). It carries out the reaction all-trans-13,14-dihydroretinoate + reduced [NADPH--hemoprotein reductase] + O2 = all-trans-4-hydroxy-13,14-dihydroretinoate + oxidized [NADPH--hemoprotein reductase] + H2O + H(+). In terms of biological role, a cytochrome P450 monooxygenase involved in the metabolism of retinoates (RAs), the active metabolites of vitamin A, and critical signaling molecules in animals. RAs exist as at least four different isomers: all-trans-RA (atRA), 9-cis-RA, 13-cis-RA, and 9,13-dicis-RA, where atRA is considered to be the biologically active isomer, although 9-cis-RA and 13-cis-RA also have activity. Catalyzes the oxidation of atRA primarily at C-4. Oxidation of atRA limits its biological activity and initiates a degradative process leading to its eventual elimination, thereby contributes to the regulation of atRA homeostasis and signaling. Able to metabolize other RAs such as 9-cis with high efficiency. Can oxidize all-trans-13,14-dihydroretinoate (DRA) to metabolites which could include all-trans-4-oxo-DRA, all-trans-4-hydroxy-DRA, all-trans-5,8-epoxy-DRA, and all-trans-18-hydroxy-DRA. Shares sequence similarity with other CYP26 family members, but has higher affinity to 9-cis-RA and is much less sensitive to the inhibitory effects of ketoconazole. In cooperation with Cyp26a1, contributes to the CNS patterning and the development of regions of higher visual acuity. The chain is Cytochrome P450 26C1 (CYP26C1) from Homo sapiens (Human).